A 565-amino-acid polypeptide reads, in one-letter code: Heme/hemopexin transporter protein HuxB (565 aa).

Residues M1–A26 form the signal peptide. The POTRA domain occupies F73–G150.

It belongs to the TPS (TC 1.B.20) family.

The protein localises to the cell outer membrane. Functionally, likely functions in the release of soluble HxuA from the cell. Probable member of a two partner secretion pathway (TPS) in which it mediates the secretion of HuxA. This is Heme/hemopexin transporter protein HuxB (hxuB) from Haemophilus influenzae.